A 251-amino-acid polypeptide reads, in one-letter code: Octanoyltransferase (251 aa).

The 186-residue stretch at A56–D241 folds into the BPL/LPL catalytic domain. Substrate is bound by residues R96–H103, A168–G170, and G181–S183. C199 acts as the Acyl-thioester intermediate in catalysis.

The protein belongs to the LipB family.

It is found in the cytoplasm. The catalysed reaction is octanoyl-[ACP] + L-lysyl-[protein] = N(6)-octanoyl-L-lysyl-[protein] + holo-[ACP] + H(+). Its pathway is protein modification; protein lipoylation via endogenous pathway; protein N(6)-(lipoyl)lysine from octanoyl-[acyl-carrier-protein]: step 1/2. Its function is as follows. Catalyzes the transfer of endogenously produced octanoic acid from octanoyl-acyl-carrier-protein onto the lipoyl domains of lipoate-dependent enzymes. Lipoyl-ACP can also act as a substrate although octanoyl-ACP is likely to be the physiological substrate. This is Octanoyltransferase from Burkholderia vietnamiensis (strain G4 / LMG 22486) (Burkholderia cepacia (strain R1808)).